A 209-amino-acid polypeptide reads, in one-letter code: Ion-translocating oxidoreductase complex subunit G (209 aa).

Residues 9-29 form a helical membrane-spanning segment; that stretch reads GLILAVFACVSTGLVALTYAL. Thr175 carries the FMN phosphoryl threonine modification.

The protein belongs to the RnfG family. In terms of assembly, the complex is composed of six subunits: RnfA, RnfB, RnfC, RnfD, RnfE and RnfG. It depends on FMN as a cofactor.

The protein resides in the cell inner membrane. Its function is as follows. Part of a membrane-bound complex that couples electron transfer with translocation of ions across the membrane. In Vibrio cholerae serotype O1 (strain ATCC 39315 / El Tor Inaba N16961), this protein is Ion-translocating oxidoreductase complex subunit G.